Consider the following 225-residue polypeptide: Ribosome maturation factor RimM (225 aa).

A PRC barrel domain is found at 144–225; that stretch reads ADEFYWVDLI…RIVVDWEADY (82 aa).

Belongs to the RimM family. As to quaternary structure, binds ribosomal protein uS19.

It localises to the cytoplasm. Functionally, an accessory protein needed during the final step in the assembly of 30S ribosomal subunit, possibly for assembly of the head region. Essential for efficient processing of 16S rRNA. May be needed both before and after RbfA during the maturation of 16S rRNA. It has affinity for free ribosomal 30S subunits but not for 70S ribosomes. The chain is Ribosome maturation factor RimM from Burkholderia lata (strain ATCC 17760 / DSM 23089 / LMG 22485 / NCIMB 9086 / R18194 / 383).